The following is a 217-amino-acid chain: Adenylate kinase (217 aa).

An ATP-binding site is contributed by 10–15; that stretch reads GAGKGT. An NMP region spans residues 30 to 59; it reads STGEILRAAVKSKTPMGVKAKEYMDQGALV. Residues Thr-31, Arg-36, 57 to 59, 85 to 88, and Gln-92 contribute to the AMP site; these read ALV and GFPR. The interval 126 to 163 is LID; it reads GRRVCRACGRAFHVKFDPPLVDGVCDACGGELYQRDDD. Arg-127 provides a ligand contact to ATP. Cys-130, Cys-133, Cys-150, and Cys-153 together coordinate Zn(2+). Positions 160 and 171 each coordinate AMP. Glu-199 serves as a coordination point for ATP.

It belongs to the adenylate kinase family. In terms of assembly, monomer.

It is found in the cytoplasm. The catalysed reaction is AMP + ATP = 2 ADP. Its pathway is purine metabolism; AMP biosynthesis via salvage pathway; AMP from ADP: step 1/1. Its function is as follows. Catalyzes the reversible transfer of the terminal phosphate group between ATP and AMP. Plays an important role in cellular energy homeostasis and in adenine nucleotide metabolism. This chain is Adenylate kinase, found in Geobacter sulfurreducens (strain ATCC 51573 / DSM 12127 / PCA).